The primary structure comprises 166 residues: Endoribonuclease YbeY (166 aa).

The Zn(2+) site is built by H132, H136, and H142.

The protein belongs to the endoribonuclease YbeY family. It depends on Zn(2+) as a cofactor.

The protein resides in the cytoplasm. In terms of biological role, single strand-specific metallo-endoribonuclease involved in late-stage 70S ribosome quality control and in maturation of the 3' terminus of the 16S rRNA. The polypeptide is Endoribonuclease YbeY (Clostridium botulinum (strain Loch Maree / Type A3)).